The following is a 200-amino-acid chain: Putative hydrolase MhqD (200 aa).

Catalysis depends on charge relay system residues S100, D150, and H181.

The protein belongs to the AB hydrolase superfamily. AB hydrolase 2 family.

It localises to the cytoplasm. Putative hydrolase that may contribute to the degradation of aromatic compounds. This Bacillus subtilis (strain 168) protein is Putative hydrolase MhqD (mhqD).